Consider the following 93-residue polypeptide: Small ribosomal subunit protein bS20c (93 aa).

This sequence belongs to the bacterial ribosomal protein bS20 family.

It localises to the plastid. The protein localises to the chloroplast. Binds directly to 16S ribosomal RNA. In Phaeodactylum tricornutum (strain CCAP 1055/1), this protein is Small ribosomal subunit protein bS20c.